The chain runs to 332 residues: Glycerol-3-phosphate dehydrogenase [NAD(P)+] (332 aa).

NADPH contacts are provided by W11, R30, and K108. 3 residues coordinate sn-glycerol 3-phosphate: K108, G137, and S139. Residue A141 participates in NADPH binding. Sn-glycerol 3-phosphate contacts are provided by K192, D245, S255, R256, and N257. K192 (proton acceptor) is an active-site residue. R256 is an NADPH binding site. Residues V280 and E282 each contribute to the NADPH site.

Belongs to the NAD-dependent glycerol-3-phosphate dehydrogenase family.

Its subcellular location is the cytoplasm. The catalysed reaction is sn-glycerol 3-phosphate + NAD(+) = dihydroxyacetone phosphate + NADH + H(+). It catalyses the reaction sn-glycerol 3-phosphate + NADP(+) = dihydroxyacetone phosphate + NADPH + H(+). It functions in the pathway membrane lipid metabolism; glycerophospholipid metabolism. Functionally, catalyzes the reduction of the glycolytic intermediate dihydroxyacetone phosphate (DHAP) to sn-glycerol 3-phosphate (G3P), the key precursor for phospholipid synthesis. In Burkholderia orbicola (strain MC0-3), this protein is Glycerol-3-phosphate dehydrogenase [NAD(P)+].